A 267-amino-acid chain; its full sequence is Orotidine 5'-phosphate decarboxylase (267 aa).

Residues aspartate 37, lysine 59–histidine 61, aspartate 91–threonine 100, tyrosine 217, and arginine 235 contribute to the substrate site. Catalysis depends on lysine 93, which acts as the Proton donor.

It belongs to the OMP decarboxylase family.

The catalysed reaction is orotidine 5'-phosphate + H(+) = UMP + CO2. Its pathway is pyrimidine metabolism; UMP biosynthesis via de novo pathway; UMP from orotate: step 2/2. In Kluyveromyces marxianus (Yeast), this protein is Orotidine 5'-phosphate decarboxylase (URA3).